The following is a 246-amino-acid chain: MSLTITSSVTHPELKDLSTVRNEQKELNISPVHDVNVTKATATFGMGCFWGAESLYGATRGVLRTTVGYAGGSSDLPTYRKMGDHTEVLEIDYDPTVISFKELLDLFWNNHEYGLTTPIKRQYASLILYHDEEQKQVAHASKLEEQERRAPEIITTEIASKENFYPAEAYHQKYRLQGHKDLASSLNLSPKLLQTSYVATKLNGYLAGVGGIEQFKAEAETMGLTPTQRQYCYYHVEQNEGQGLYC.

Residue C48 is the Cysteine sulfenic acid (-SOH) intermediate of the active site. C48 and C246 form a disulfide bridge.

Post-translationally, conjugated to URM1, a ubiquitin-like protein.

It catalyses the reaction L-methionyl-[protein] + [thioredoxin]-disulfide + H2O = L-methionyl-(S)-S-oxide-[protein] + [thioredoxin]-dithiol. The enzyme catalyses [thioredoxin]-disulfide + L-methionine + H2O = L-methionine (S)-S-oxide + [thioredoxin]-dithiol. Functionally, has an important function as a repair enzyme for proteins that have been inactivated by oxidation. Catalyzes the reduction of methionine sulfoxide in proteins to methionine. Does not catalyze the reverse reaction involving the oxidation of methionine residues. This Drosophila melanogaster (Fruit fly) protein is Peptide methionine sulfoxide reductase.